Consider the following 479-residue polypeptide: Zinc finger and SCAN domain-containing protein 26 (479 aa).

Lys17 is covalently cross-linked (Glycyl lysine isopeptide (Lys-Gly) (interchain with G-Cter in SUMO2)). Positions 51–133 (CKRFRQLRYE…VFLEDLQLEL (83 aa)) constitute an SCAN box domain. A disordered region spans residues 155-187 (TAPGKATPERQVQPEGDVPQPEREKGEAKRIEN). Residues 174–187 (QPEREKGEAKRIEN) show a composition bias toward basic and acidic residues. Residues 232 to 254 (CKCSEYGQAFFQHSDLIKHESSH) form a C2H2-type 1; degenerate zinc finger. C2H2-type zinc fingers lie at residues 283–305 (HQCH…QKIH), 311–333 (YQCK…LRIH), 339–361 (YLCI…QRIH), 367–389 (CQCK…QRIH), 395–417 (HQCN…HRIH), 423–445 (FKCT…VRIH), and 451–473 (YKCN…QRYH).

The protein resides in the nucleus. Its function is as follows. May be involved in transcriptional regulation. The polypeptide is Zinc finger and SCAN domain-containing protein 26 (ZSCAN26) (Bos taurus (Bovine)).